A 163-amino-acid chain; its full sequence is Cyanate hydratase (163 aa).

Residues R103, E106, and S129 contribute to the active site.

This sequence belongs to the cyanase family.

The catalysed reaction is cyanate + hydrogencarbonate + 3 H(+) = NH4(+) + 2 CO2. Catalyzes the reaction of cyanate with bicarbonate to produce ammonia and carbon dioxide. This Ajellomyces capsulatus (strain H143) (Darling's disease fungus) protein is Cyanate hydratase.